Here is a 230-residue protein sequence, read N- to C-terminus: Cytidylate kinase (230 aa).

12–20 (GPSGAGKGT) serves as a coordination point for ATP.

This sequence belongs to the cytidylate kinase family. Type 1 subfamily.

The protein resides in the cytoplasm. It catalyses the reaction CMP + ATP = CDP + ADP. It carries out the reaction dCMP + ATP = dCDP + ADP. The protein is Cytidylate kinase of Shewanella piezotolerans (strain WP3 / JCM 13877).